We begin with the raw amino-acid sequence, 115 residues long: Large ribosomal subunit protein bL20 (115 aa).

This sequence belongs to the bacterial ribosomal protein bL20 family.

Binds directly to 23S ribosomal RNA and is necessary for the in vitro assembly process of the 50S ribosomal subunit. It is not involved in the protein synthesizing functions of that subunit. In Bdellovibrio bacteriovorus (strain ATCC 15356 / DSM 50701 / NCIMB 9529 / HD100), this protein is Large ribosomal subunit protein bL20.